A 165-amino-acid polypeptide reads, in one-letter code: Cysteine-rich hydrophobic domain-containing protein 2 (165 aa).

The stretch at 1 to 26 (MADFDEIYEEEEDEERALEEQLLKYS) forms a coiled coil. The short motif at 88 to 106 (CGCLCCCCTLGCSMWPVIC) is the CHIC motif (Cys-rich) element.

Belongs to the CHIC family. Palmitoylation in the CHIC motif is required for membrane association.

Its subcellular location is the membrane. The protein resides in the golgi apparatus. This chain is Cysteine-rich hydrophobic domain-containing protein 2 (Chic2), found in Mus musculus (Mouse).